The primary structure comprises 230 residues: Phosphoribosylaminoimidazole-succinocarboxamide synthase (230 aa).

Belongs to the SAICAR synthetase family.

It catalyses the reaction 5-amino-1-(5-phospho-D-ribosyl)imidazole-4-carboxylate + L-aspartate + ATP = (2S)-2-[5-amino-1-(5-phospho-beta-D-ribosyl)imidazole-4-carboxamido]succinate + ADP + phosphate + 2 H(+). Its pathway is purine metabolism; IMP biosynthesis via de novo pathway; 5-amino-1-(5-phospho-D-ribosyl)imidazole-4-carboxamide from 5-amino-1-(5-phospho-D-ribosyl)imidazole-4-carboxylate: step 1/2. The sequence is that of Phosphoribosylaminoimidazole-succinocarboxamide synthase from Thermotoga sp. (strain RQ2).